An 88-amino-acid polypeptide reads, in one-letter code: HssA/B-like protein 6 (88 aa).

The interval 1–22 is disordered; that stretch reads MSILSALTSISNPMKSSNSNVA.

This sequence belongs to the hssA/B family.

This chain is HssA/B-like protein 6 (hssl6), found in Dictyostelium discoideum (Social amoeba).